Reading from the N-terminus, the 260-residue chain is Taurine import ATP-binding protein TauB (260 aa).

The 230-residue stretch at 6–235 (AQQVSVVYAS…RYAHGEPMRS (230 aa)) folds into the ABC transporter domain. 40-47 (GASGCGKS) contacts ATP.

It belongs to the ABC transporter superfamily. Taurine importer (TC 3.A.1.17.1) family. In terms of assembly, the complex is composed of two ATP-binding proteins (TauB), two transmembrane proteins (TauC) and a solute-binding protein (TauA).

The protein localises to the cell inner membrane. It catalyses the reaction taurine(out) + ATP + H2O = taurine(in) + ADP + phosphate + H(+). Part of the ABC transporter complex TauABC involved in taurine import. Responsible for energy coupling to the transport system. In Burkholderia pseudomallei (strain 1710b), this protein is Taurine import ATP-binding protein TauB.